A 119-amino-acid polypeptide reads, in one-letter code: U-scoloptoxin(16)-Er11a (119 aa).

A signal peptide spans 1-19 (MKSWTAAVLSLGLIYLSIS).

This sequence belongs to the scoloptoxin-16 family. Contains 4 disulfide bonds. In terms of tissue distribution, expressed by the venom gland.

The protein localises to the secreted. The protein is U-scoloptoxin(16)-Er11a of Ethmostigmus rubripes (Giant centipede).